Reading from the N-terminus, the 908-residue chain is Probable RNA-directed DNA polymerase from transposon X-element (908 aa).

A Reverse transcriptase domain is found at 481-752 (AIVRLQYFPY…NAAKYLGVLL (272 aa)). Positions 883 to 908 (RPPRRLNRRQPRDLITRSPLTRVRRS) are disordered.

Mg(2+) serves as cofactor. The cofactor is Mn(2+).

The enzyme catalyses DNA(n) + a 2'-deoxyribonucleoside 5'-triphosphate = DNA(n+1) + diphosphate. The chain is Probable RNA-directed DNA polymerase from transposon X-element (X-element\ORF2) from Drosophila melanogaster (Fruit fly).